The following is an 83-amino-acid chain: MGSTKTLVTCFLVIILAVSLPNNNVLASDARIEGFSFDNCNIRCSEDYWNDECNKDCLRAGFQKGGQCGSPCIPCPVKCCCQK.

The first 27 residues, 1–27 (MGSTKTLVTCFLVIILAVSLPNNNVLA), serve as a signal peptide directing secretion. Disulfide bonds link cysteine 40/cysteine 81, cysteine 44/cysteine 68, cysteine 53/cysteine 79, and cysteine 57/cysteine 80.

Belongs to the DEFL family.

Its subcellular location is the secreted. This chain is Defensin-like protein 47, found in Arabidopsis thaliana (Mouse-ear cress).